A 363-amino-acid polypeptide reads, in one-letter code: Endopolygalacturonase B (363 aa).

An N-terminal signal peptide occupies residues 1-20; sequence MQLLQSSVIAATVGAALVAA. Residues 21–28 constitute a propeptide that is removed on maturation; that stretch reads VPVELKAR. Cysteines 31 and 46 form a disulfide. PbH1 repeat units lie at residues 158-187, 188-209, 210-230, 239-260, 268-290, and 302-347; these read SDNLNITDVTIDNSAGTAEGHNTDAFDVGS, STYINIDGATVYNQDDCLAINS, GSHITFTNGYCDGGHGLSIGS, VEDVTISNSKVVNSQNGVRIKT, VSNVKFEDITLSGITKYGLIVEQ, and TNGI…SITG. An N-linked (GlcNAc...) asparagine glycan is attached at Asn162. Asp202 (proton donor) is an active-site residue. A disulfide bridge connects residues Cys204 and Cys220. His224 is a catalytic residue. Intrachain disulfides connect Cys330/Cys335 and Cys354/Cys363. Residue Asn356 is glycosylated (N-linked (GlcNAc...) asparagine).

This sequence belongs to the glycosyl hydrolase 28 family.

Its subcellular location is the secreted. The enzyme catalyses (1,4-alpha-D-galacturonosyl)n+m + H2O = (1,4-alpha-D-galacturonosyl)n + (1,4-alpha-D-galacturonosyl)m.. Functionally, involved in maceration and soft-rotting of plant tissue. Hydrolyzes the 1,4-alpha glycosidic bonds of de-esterified pectate in the smooth region of the plant cell wall. This chain is Endopolygalacturonase B (pgaB), found in Aspergillus oryzae (strain ATCC 42149 / RIB 40) (Yellow koji mold).